A 461-amino-acid polypeptide reads, in one-letter code: Cysteine--tRNA ligase (461 aa).

A Zn(2+)-binding site is contributed by cysteine 28. The 'HIGH' region motif lies at 30 to 40 (ITVYDLCHIGH). 3 residues coordinate Zn(2+): cysteine 209, histidine 234, and glutamate 238. A 'KMSKS' region motif is present at residues 266–270 (KMSKS). An ATP-binding site is contributed by lysine 269.

The protein belongs to the class-I aminoacyl-tRNA synthetase family. Monomer. The cofactor is Zn(2+).

Its subcellular location is the cytoplasm. The enzyme catalyses tRNA(Cys) + L-cysteine + ATP = L-cysteinyl-tRNA(Cys) + AMP + diphosphate. This is Cysteine--tRNA ligase from Escherichia coli O6:K15:H31 (strain 536 / UPEC).